The chain runs to 175 residues: FMN reductase (NADH) RutF (175 aa).

Belongs to the non-flavoprotein flavin reductase family. RutF subfamily.

The catalysed reaction is FMNH2 + NAD(+) = FMN + NADH + 2 H(+). In terms of biological role, catalyzes the reduction of FMN to FMNH2 which is used to reduce pyrimidine by RutA via the Rut pathway. This Serratia proteamaculans (strain 568) protein is FMN reductase (NADH) RutF.